The sequence spans 966 residues: Leucine--tRNA ligase (966 aa).

Positions proline 71–histidine 82 match the 'HIGH' region motif. The interval tyrosine 561–serine 580 is disordered. The segment covering alanine 571–serine 580 has biased composition (basic and acidic residues). The 'KMSKS' region signature appears at lysine 734–serine 738. Lysine 737 is an ATP binding site.

This sequence belongs to the class-I aminoacyl-tRNA synthetase family.

The protein resides in the cytoplasm. The catalysed reaction is tRNA(Leu) + L-leucine + ATP = L-leucyl-tRNA(Leu) + AMP + diphosphate. This Streptomyces coelicolor (strain ATCC BAA-471 / A3(2) / M145) protein is Leucine--tRNA ligase.